The following is a 478-amino-acid chain: NADH oxidase (478 aa).

FAD is bound by residues Gly-8–Ala-12, Asp-33, Cys-43, Val-80, Ala-111–Ala-114, Lys-149, and Tyr-177. Residue His-11 is the Proton acceptor of the active site. The active-site Redox-active is the Cys-43. Position 43 is a cysteine sulfinic acid (-SO2H) (Cys-43). Residues Val-170–Ala-185, Asp-197, and Gly-264 each bind NAD(+). FAD-binding positions include Leu-295–Gly-305, Leu-322, Ala-323, and Thr-324. Ala-353 is a binding site for NAD(+). Phe-450 contacts FAD.

The protein belongs to the class-III pyridine nucleotide-disulfide oxidoreductase family. FAD serves as cofactor.

The enzyme catalyses 2 NADH + O2 + 2 H(+) = 2 NAD(+) + 2 H2O. Functionally, catalyzes the four-electron reduction of molecular oxygen to water. This is NADH oxidase (nox) from Mycoplasma genitalium (strain ATCC 33530 / DSM 19775 / NCTC 10195 / G37) (Mycoplasmoides genitalium).